The primary structure comprises 117 residues: NADH-ubiquinone oxidoreductase chain 3 (117 aa).

3 helical membrane-spanning segments follow: residues 4–24 (ILIY…LGLI), 57–77 (FFLL…LLPL), and 88–108 (WPLT…FHEW).

Belongs to the complex I subunit 3 family.

The protein resides in the mitochondrion membrane. The catalysed reaction is a ubiquinone + NADH + 5 H(+)(in) = a ubiquinol + NAD(+) + 4 H(+)(out). Core subunit of the mitochondrial membrane respiratory chain NADH dehydrogenase (Complex I) that is believed to belong to the minimal assembly required for catalysis. Complex I functions in the transfer of electrons from NADH to the respiratory chain. The immediate electron acceptor for the enzyme is believed to be ubiquinone. This chain is NADH-ubiquinone oxidoreductase chain 3 (ND3), found in Heterololigo bleekeri (Spear squid).